The following is a 467-amino-acid chain: ADP-dependent glucose/glucosamine kinase (467 aa).

The ADPK domain maps to 10–467 (RLWKRLYVNA…FVSEFGMRKR (458 aa)). Residues Asp-42, Glu-96, Gly-120, 120–121 (GQ), His-184, and Asp-211 contribute to the D-glucose site. Glu-279 is a Mg(2+) binding site. Asn-305 contacts ADP. Glu-308 is a Mg(2+) binding site. Residues 352–353 (HT), Val-440, and Gly-450 each bind ADP. A D-glucose-binding site is contributed by Asp-451. Asp-451 contacts Mg(2+). Asp-451 acts as the Proton acceptor in catalysis.

This sequence belongs to the ADP-dependent glucokinase family. Monomer. Mg(2+) serves as cofactor.

It is found in the cytoplasm. It carries out the reaction D-glucose + ADP = D-glucose 6-phosphate + AMP + H(+). It catalyses the reaction D-glucosamine + ADP = D-glucosamine 6-phosphate + AMP + H(+). Its pathway is carbohydrate degradation; glycolysis. In terms of biological role, catalyzes the ADP-dependent phosphorylation of D-glucose to D-glucose 6-phosphate and glucosamine to glucosamine 6-phosphate. Can also use CDP as the phosphoryl group donor and D-1,5-anhydroglucitol as the phosphoryl group acceptor. The chain is ADP-dependent glucose/glucosamine kinase from Thermococcus litoralis (strain ATCC 51850 / DSM 5473 / JCM 8560 / NS-C).